Consider the following 177-residue polypeptide: CASP-like protein 2U1 (177 aa).

Residues 1–21 (MVLRIVASLLSIAALVLMAKD) traverse the membrane as a helical segment. Residues 22-48 (KQVVYLNLAGEELTLEAKHSYVEAFVY) are Cytoplasmic-facing. The chain crosses the membrane as a helical span at residues 49–69 (LVYSNGLVAIYCFLLVFALVF). Residues 70–80 (RLIDKAGCGKS) are Extracellular-facing. Residues 81–101 (AAWIIFLLDQGLAYVLLAAAA) traverse the membrane as a helical segment. Residues 102 to 131 (ASTEVAYVAKRGNNKVGWSEVCSTFGHFCN) are Cytoplasmic-facing. Residues 132–152 (LVGVSIVITFISVLAMATLSV) traverse the membrane as a helical segment. Topologically, residues 153 to 177 (MSARRLFKTYGPERKQISSNDAPAI) are extracellular.

The protein belongs to the Casparian strip membrane proteins (CASP) family. Homodimer and heterodimers.

The protein localises to the cell membrane. In Osmunda lancea (Fern), this protein is CASP-like protein 2U1.